The primary structure comprises 323 residues: Thiamine-monophosphate kinase (323 aa).

Mg(2+)-binding residues include Asp30, Ser45, Thr46, and Asp47. His54 serves as a coordination point for substrate. Asp75 and Asp122 together coordinate Mg(2+). ATP is bound by residues 121–122 and Arg146; that span reads GD. Asp212 is a Mg(2+) binding site. Residue Ser214 participates in ATP binding. Asp215 contributes to the Mg(2+) binding site. Residues Glu263 and Phe319 each coordinate substrate.

The protein belongs to the thiamine-monophosphate kinase family.

It catalyses the reaction thiamine phosphate + ATP = thiamine diphosphate + ADP. It functions in the pathway cofactor biosynthesis; thiamine diphosphate biosynthesis; thiamine diphosphate from thiamine phosphate: step 1/1. In terms of biological role, catalyzes the ATP-dependent phosphorylation of thiamine-monophosphate (TMP) to form thiamine-pyrophosphate (TPP), the active form of vitamin B1. This chain is Thiamine-monophosphate kinase, found in Buchnera aphidicola subsp. Acyrthosiphon pisum (strain APS) (Acyrthosiphon pisum symbiotic bacterium).